A 382-amino-acid chain; its full sequence is Intermediate transcription factor 3 large subunit (382 aa).

It belongs to the poxviruses A23 family. As to quaternary structure, heterodimer of a 45 kDa and a 32 kDa subunit.

Functionally, acts with RNA polymerase to initiate transcription from intermediate gene promoters. This chain is Intermediate transcription factor 3 large subunit (VITF3L), found in Camelus.